Here is a 188-residue protein sequence, read N- to C-terminus: Elongation factor P (188 aa).

The protein belongs to the elongation factor P family.

Its subcellular location is the cytoplasm. The protein operates within protein biosynthesis; polypeptide chain elongation. In terms of biological role, involved in peptide bond synthesis. Stimulates efficient translation and peptide-bond synthesis on native or reconstituted 70S ribosomes in vitro. Probably functions indirectly by altering the affinity of the ribosome for aminoacyl-tRNA, thus increasing their reactivity as acceptors for peptidyl transferase. In Rickettsia conorii (strain ATCC VR-613 / Malish 7), this protein is Elongation factor P (efp).